The following is a 668-amino-acid chain: DNA ligase (668 aa).

NAD(+) is bound by residues 31–35 (DAEYD), 80–81 (SL), and E112. Residue K114 is the N6-AMP-lysine intermediate of the active site. NAD(+) contacts are provided by R135, E172, K289, and K313. Residues C407, C410, C425, and C431 each contribute to the Zn(2+) site. The region spanning 591–668 (SVPQPLAGKV…NEEQLIELLN (78 aa)) is the BRCT domain.

It belongs to the NAD-dependent DNA ligase family. LigA subfamily. It depends on Mg(2+) as a cofactor. The cofactor is Mn(2+).

It carries out the reaction NAD(+) + (deoxyribonucleotide)n-3'-hydroxyl + 5'-phospho-(deoxyribonucleotide)m = (deoxyribonucleotide)n+m + AMP + beta-nicotinamide D-nucleotide.. In terms of biological role, DNA ligase that catalyzes the formation of phosphodiester linkages between 5'-phosphoryl and 3'-hydroxyl groups in double-stranded DNA using NAD as a coenzyme and as the energy source for the reaction. It is essential for DNA replication and repair of damaged DNA. This chain is DNA ligase, found in Aliivibrio fischeri (strain MJ11) (Vibrio fischeri).